The chain runs to 184 residues: Protein GrpE (184 aa).

The tract at residues 1–32 (MEEQKQTPSTPTPDTAAEAAVNAATAAPETAG) is disordered. Positions 12 to 32 (TPDTAAEAAVNAATAAPETAG) are enriched in low complexity.

Belongs to the GrpE family. In terms of assembly, homodimer.

Its subcellular location is the cytoplasm. Its function is as follows. Participates actively in the response to hyperosmotic and heat shock by preventing the aggregation of stress-denatured proteins, in association with DnaK and GrpE. It is the nucleotide exchange factor for DnaK and may function as a thermosensor. Unfolded proteins bind initially to DnaJ; upon interaction with the DnaJ-bound protein, DnaK hydrolyzes its bound ATP, resulting in the formation of a stable complex. GrpE releases ADP from DnaK; ATP binding to DnaK triggers the release of the substrate protein, thus completing the reaction cycle. Several rounds of ATP-dependent interactions between DnaJ, DnaK and GrpE are required for fully efficient folding. This is Protein GrpE from Cupriavidus pinatubonensis (strain JMP 134 / LMG 1197) (Cupriavidus necator (strain JMP 134)).